A 349-amino-acid polypeptide reads, in one-letter code: Secondary metabolism regulator LAE1 (349 aa).

Positions 1–46 are disordered; the sequence is MSSRNAPSGCVAPSPATAAPPSPTNLRLTVGQSGSESANEPGGEPE. The span at 25–38 shows a compositional bias: polar residues; it reads NLRLTVGQSGSESA.

This sequence belongs to the methyltransferase superfamily. LaeA methyltransferase family. As to quaternary structure, component of the heterotrimeric velvet complex composed of LAE1, VEL1 and VEL2; VEL1 acting as a bridging protein between LAE1 and VEL2.

It is found in the nucleus. The enzyme catalyses L-methionyl-[protein] + S-adenosyl-L-methionine = S-methyl-L-methionyl-[protein] + S-adenosyl-L-homocysteine. In terms of biological role, methyltransferase that performs automethylation. No other methyl-accepting substrate has been identified yet. Component of the velvet transcription factor complex that acts as a global regulator for secondary metabolite gene expression. Controls the expression of the gamma-pentyl-pyrone gene clusters. Required for the expression of cellulase. Regulates asexual sporulation (conidiation) by environmental stimuli such as light and/or mechanical injury. Required for oxidative stress tolerance. Also plays a role in defense and parasitism on other fungi. The chain is Secondary metabolism regulator LAE1 from Hypocrea atroviridis (strain ATCC 20476 / IMI 206040) (Trichoderma atroviride).